A 240-amino-acid polypeptide reads, in one-letter code: Ribose-5-phosphate isomerase A (240 aa).

Substrate is bound by residues 41–44, 94–97, and 107–110; these read TGST, DGAD, and KGGG. The active-site Proton acceptor is the glutamate 116. Lysine 134 serves as a coordination point for substrate.

This sequence belongs to the ribose 5-phosphate isomerase family. In terms of assembly, homodimer.

The catalysed reaction is aldehydo-D-ribose 5-phosphate = D-ribulose 5-phosphate. The protein operates within carbohydrate degradation; pentose phosphate pathway; D-ribose 5-phosphate from D-ribulose 5-phosphate (non-oxidative stage): step 1/1. Catalyzes the reversible conversion of ribose-5-phosphate to ribulose 5-phosphate. This is Ribose-5-phosphate isomerase A from Polaromonas sp. (strain JS666 / ATCC BAA-500).